The following is a 234-amino-acid chain: 1-(5-phosphoribosyl)-5-[(5-phosphoribosylamino)methylideneamino] imidazole-4-carboxamide isomerase (234 aa).

Aspartate 9 serves as the catalytic Proton acceptor. Aspartate 131 functions as the Proton donor in the catalytic mechanism.

It belongs to the HisA/HisF family.

The protein localises to the cytoplasm. It catalyses the reaction 1-(5-phospho-beta-D-ribosyl)-5-[(5-phospho-beta-D-ribosylamino)methylideneamino]imidazole-4-carboxamide = 5-[(5-phospho-1-deoxy-D-ribulos-1-ylimino)methylamino]-1-(5-phospho-beta-D-ribosyl)imidazole-4-carboxamide. The protein operates within amino-acid biosynthesis; L-histidine biosynthesis; L-histidine from 5-phospho-alpha-D-ribose 1-diphosphate: step 4/9. This chain is 1-(5-phosphoribosyl)-5-[(5-phosphoribosylamino)methylideneamino] imidazole-4-carboxamide isomerase, found in Staphylococcus aureus (strain JH1).